Reading from the N-terminus, the 86-residue chain is Exodeoxyribonuclease 7 small subunit (86 aa).

This sequence belongs to the XseB family. In terms of assembly, heterooligomer composed of large and small subunits.

It is found in the cytoplasm. It carries out the reaction Exonucleolytic cleavage in either 5'- to 3'- or 3'- to 5'-direction to yield nucleoside 5'-phosphates.. Functionally, bidirectionally degrades single-stranded DNA into large acid-insoluble oligonucleotides, which are then degraded further into small acid-soluble oligonucleotides. The chain is Exodeoxyribonuclease 7 small subunit from Xanthomonas axonopodis pv. citri (strain 306).